The primary structure comprises 495 residues: Aspartyl/glutamyl-tRNA(Asn/Gln) amidotransferase subunit B (495 aa).

The protein belongs to the GatB/GatE family. GatB subfamily. Heterotrimer of A, B and C subunits.

It carries out the reaction L-glutamyl-tRNA(Gln) + L-glutamine + ATP + H2O = L-glutaminyl-tRNA(Gln) + L-glutamate + ADP + phosphate + H(+). The enzyme catalyses L-aspartyl-tRNA(Asn) + L-glutamine + ATP + H2O = L-asparaginyl-tRNA(Asn) + L-glutamate + ADP + phosphate + 2 H(+). In terms of biological role, allows the formation of correctly charged Asn-tRNA(Asn) or Gln-tRNA(Gln) through the transamidation of misacylated Asp-tRNA(Asn) or Glu-tRNA(Gln) in organisms which lack either or both of asparaginyl-tRNA or glutaminyl-tRNA synthetases. The reaction takes place in the presence of glutamine and ATP through an activated phospho-Asp-tRNA(Asn) or phospho-Glu-tRNA(Gln). This Methylocella silvestris (strain DSM 15510 / CIP 108128 / LMG 27833 / NCIMB 13906 / BL2) protein is Aspartyl/glutamyl-tRNA(Asn/Gln) amidotransferase subunit B.